A 91-amino-acid polypeptide reads, in one-letter code: Small ribosomal subunit protein bS20 (91 aa).

The protein belongs to the bacterial ribosomal protein bS20 family.

Functionally, binds directly to 16S ribosomal RNA. The sequence is that of Small ribosomal subunit protein bS20 from Acidithiobacillus ferrooxidans (strain ATCC 23270 / DSM 14882 / CIP 104768 / NCIMB 8455) (Ferrobacillus ferrooxidans (strain ATCC 23270)).